A 410-amino-acid chain; its full sequence is Scarecrow-like protein 32 (410 aa).

The 391-residue stretch at 18–408 (LRGCGDANFM…HSVVFATVWV (391 aa)) folds into the GRAS domain. Residues 25–88 (NFMEQLLLHC…AVSKTPTLSS (64 aa)) are leucine repeat I (LRI). A VHIID region spans residues 107–188 (LAAFVDLTPW…HFPPFINISY (82 aa)). The VHIID signature appears at 138–142 (VHIVD). The segment at 190-227 (ELGSKLVNFATTRNITMEFTIVPSTYSDGFSSLLQQLR) is leucine repeat II (LRII). The tract at residues 237–329 (LVVNCHMMLR…EAEISWKIEN (93 aa)) is PFYRE. Residues 332–408 (AKEGAERVER…HSVVFATVWV (77 aa)) form an SAW region.

It belongs to the GRAS family. As to expression, expressed in seedlings, leaves and flowers.

It localises to the nucleus. Probable transcription factor involved in plant development. This is Scarecrow-like protein 32 (SCL32) from Arabidopsis thaliana (Mouse-ear cress).